The following is a 157-amino-acid chain: Cytochrome c-type biogenesis protein CcmE (157 aa).

Topologically, residues 1 to 7 are cytoplasmic; it reads MTPRQRR. A helical; Signal-anchor for type II membrane protein membrane pass occupies residues 8–28; the sequence is LGLLAAALACCGVAAALVLNA. Topologically, residues 29–157 are periplasmic; the sequence is FRANLVFFFS…GAMAAQELRR (129 aa). Heme is bound by residues His-123 and Tyr-127.

It belongs to the CcmE/CycJ family.

The protein resides in the cell inner membrane. Heme chaperone required for the biogenesis of c-type cytochromes. Transiently binds heme delivered by CcmC and transfers the heme to apo-cytochromes in a process facilitated by CcmF and CcmH. The polypeptide is Cytochrome c-type biogenesis protein CcmE (Cupriavidus taiwanensis (strain DSM 17343 / BCRC 17206 / CCUG 44338 / CIP 107171 / LMG 19424 / R1) (Ralstonia taiwanensis (strain LMG 19424))).